The primary structure comprises 291 residues: uncharacterized protein (291 aa).

Disordered stretches follow at residues 29–50 (SEKP…LRDS) and 168–291 (RKVK…AELK). Ser-50 is subject to Phosphoserine. 2 stretches are compositionally biased toward polar residues: residues 176-186 (NSKNPSKTGTP) and 205-217 (QKNS…SKLI). Residues 221–237 (YKDEWLQQQKAEADRRT) are compositionally biased toward basic and acidic residues. The span at 280-291 (SSPSESTPAELK) shows a compositional bias: polar residues.

This is an uncharacterized protein from Mus musculus (Mouse).